A 782-amino-acid chain; its full sequence is Potassium transporter 6 (782 aa).

The Cytoplasmic portion of the chain corresponds to 1-18 (MEIESGSYQNAKKESWRT). The chain crosses the membrane as a helical span at residues 19–39 (VLTLAYQSLGVVYGDLSISPL). At 40 to 61 (YVYKSTFAEDIHHSESNEEIFG) the chain is on the extracellular side. Residues 62 to 82 (VLSFIFWTITLVPLLKYVFIV) form a helical membrane-spanning segment. Residues 83–153 (LRADDNGEGG…TLEKHGVLQK (71 aa)) lie on the Cytoplasmic side of the membrane. The helical transmembrane segment at 154-174 (ILLVLALIGTCMVIGDGVLTP) threads the bilayer. The Extracellular portion of the chain corresponds to 175-195 (AISVFSAVSGVELSMSKEHHK). Residues 196–216 (YIELPAACVILIGLFALQHYG) form a helical membrane-spanning segment. Residues 217–219 (THR) are Cytoplasmic-facing. A helical membrane pass occupies residues 220–240 (VGFLFAPVILLWLMCISAIGV). Topologically, residues 241–270 (YNIFHWNPHVYQALSPYYMYKFLKKTQSRG) are extracellular. Residues 271-291 (WMSLGGILLCITGSEAMFADL) traverse the membrane as a helical segment. Topologically, residues 292-296 (GHFSQ) are cytoplasmic. The chain crosses the membrane as a helical span at residues 297 to 317 (LSIKIAFTSLVYPSLILAYMG). The Extracellular portion of the chain corresponds to 318–347 (QAAYLSQHHIIESEYNIGFYVSVPERLRWP). The helical transmembrane segment at 348–368 (VLVIAILAAVVGSQAIITGTF) threads the bilayer. The Cytoplasmic portion of the chain corresponds to 369 to 395 (SIIKQCSALGCFPKVKIVHTSSKIHGQ). The helical transmembrane segment at 396–416 (IYIPEINWILMVLCLAVTIGF) threads the bilayer. The Extracellular portion of the chain corresponds to 417 to 421 (RDTKR). 2 consecutive transmembrane segments (helical) span residues 422 to 442 (LGNASGLAVITVMLVTTCLMS) and 443 to 463 (LVIVLCWHKSVIFAIVFVVFF). Residues 464–474 (GTIESLYFSAS) are Extracellular-facing. Residues 475–495 (LIKFLEGAWVPIALAFCFLLA) form a helical membrane-spanning segment. Residues 496–782 (MCTWHYGTLK…TLEVGMIYNV (287 aa)) are Cytoplasmic-facing. The span at 664 to 675 (YESDIDDPDKPG) shows a compositional bias: basic and acidic residues. Residues 664–693 (YESDIDDPDKPGTSEIRSPKPKKKSKSKVK) form a disordered region. A compositionally biased stretch (basic residues) spans 682–693 (PKPKKKSKSKVK).

This sequence belongs to the HAK/KUP transporter (TC 2.A.72.3) family.

The protein localises to the cell membrane. Functionally, probable potassium transporter. The protein is Potassium transporter 6 (POT6) of Arabidopsis thaliana (Mouse-ear cress).